Reading from the N-terminus, the 144-residue chain is Large-conductance mechanosensitive channel (144 aa).

2 helical membrane passes run 16 to 36 (VIDLAVGVIIGAAFGKIVDSV) and 86 to 106 (GNFLTIVVNFVILAFIIFLMV).

It belongs to the MscL family. In terms of assembly, homopentamer.

The protein resides in the cell inner membrane. In terms of biological role, channel that opens in response to stretch forces in the membrane lipid bilayer. May participate in the regulation of osmotic pressure changes within the cell. In Cupriavidus pinatubonensis (strain JMP 134 / LMG 1197) (Cupriavidus necator (strain JMP 134)), this protein is Large-conductance mechanosensitive channel.